The following is a 242-amino-acid chain: MIRVIFLDLDKTLLPEYDPEPAIPIVEELKKKGFEIVFNSSKTRAEQEYYREKLNVKGPFIVENGSAIYIPSNYFPFEVPGVKRGEYMVLELGVKVEEIRKALKELEAEYGLKYYGNSTDEEIEKFTKLPKHLIPLAKDREYSETIFLWKREGWEKDLIRKGFKVTMGSRFYAVHGNSDKGKAAKLLLDLYKRVDEVESYAVGDGENDFPMFDVVDFAFLIGDLRHENAENVTSIKDVLKKI.

Catalysis depends on D8, which acts as the Nucleophile. Positions 8, 10, 169, and 204 each coordinate Mg(2+).

It belongs to the HAD-like hydrolase superfamily. MPGP family. Requires Mg(2+) as cofactor.

The protein localises to the cytoplasm. It catalyses the reaction 2-O-(alpha-D-mannosyl)-3-phosphoglycerate + H2O = (2R)-2-O-(alpha-D-mannosyl)-glycerate + phosphate. Its pathway is carbohydrate biosynthesis; 2-(alpha-D-mannosyl)-D-glycerate biosynthesis; 2-(alpha-D-mannosyl)-D-glycerate from GDP-alpha-D-mannose (MPG route): step 2/2. In terms of biological role, hydrolyzes mannosyl-3-phosphoglycerate (MPG) to form the osmolyte mannosylglycerate (MG). The chain is Mannosyl-3-phosphoglycerate phosphatase from Pyrococcus furiosus (strain ATCC 43587 / DSM 3638 / JCM 8422 / Vc1).